Consider the following 186-residue polypeptide: UPF0303 protein ZMO1353 (186 aa).

Belongs to the UPF0303 family.

This chain is UPF0303 protein ZMO1353, found in Zymomonas mobilis subsp. mobilis (strain ATCC 31821 / ZM4 / CP4).